Consider the following 236-residue polypeptide: Small ribosomal subunit protein uS2c (236 aa).

It belongs to the universal ribosomal protein uS2 family.

It is found in the plastid. The protein resides in the chloroplast. The protein is Small ribosomal subunit protein uS2c (rps2) of Ceratophyllum demersum (Rigid hornwort).